Consider the following 348-residue polypeptide: Putative S-adenosyl-L-methionine-dependent methyltransferase MRA_3439 (348 aa).

S-adenosyl-L-methionine contacts are provided by residues Asp171 and 200–201 (DL).

It belongs to the UPF0677 family.

Functionally, exhibits S-adenosyl-L-methionine-dependent methyltransferase activity. This is Putative S-adenosyl-L-methionine-dependent methyltransferase MRA_3439 from Mycobacterium tuberculosis (strain ATCC 25177 / H37Ra).